The chain runs to 211 residues: Glutathione S-transferase class-mu 28 kDa isozyme (211 aa).

Residues 4 to 86 (DHIKVIYFNG…YMAKKHHMMG (83 aa)) form the GST N-terminal domain. Residues Y10, R16, W41, K45, L53, E70, S71, and D104 each coordinate glutathione. Residues 88 to 211 (TEEEYYNVEK…YLSDRAATPF (124 aa)) form the GST C-terminal domain.

This sequence belongs to the GST superfamily. Mu family. In terms of assembly, homodimer.

The catalysed reaction is RX + glutathione = an S-substituted glutathione + a halide anion + H(+). Conjugation of reduced glutathione to a wide number of exogenous and endogenous hydrophobic electrophiles. In terms of biological role, GST isoenzymes appear to play a central role in the parasite detoxification system. Other functions are also suspected including a role in increasing the solubility of haematin in the parasite gut. This is Glutathione S-transferase class-mu 28 kDa isozyme from Schistosoma haematobium (Blood fluke).